The chain runs to 144 residues: Histone H2B.2, sperm (144 aa).

Residues 1–51 (MPRSPSKTSPRKGSPRRGSPSRKASPKRGGKGAKRAGKGGRRRNVVRRRRR) are disordered. 5 consecutive short sequence motifs (SPKK motif) follow at residues 4 to 7 (SPSK), 9 to 12 (SPRK), 14 to 17 (SPRR), 19 to 22 (SPSR), and 25 to 28 (SPKR). A phosphoserine mark is found at Ser-14, Ser-19, and Ser-25. Residues 24-51 (ASPKRGGKGAKRAGKGGRRRNVVRRRRR) show a composition bias toward basic residues. Ser-131 carries O-linked (GlcNAc) serine glycosylation. Residue Lys-139 forms a Glycyl lysine isopeptide (Lys-Gly) (interchain with G-Cter in ubiquitin) linkage.

The protein belongs to the histone H2B family. As to quaternary structure, the nucleosome is a histone octamer containing two molecules each of H2A, H2B, H3 and H4 assembled in one H3-H4 heterotetramer and two H2A-H2B heterodimers. The octamer wraps approximately 147 bp of DNA. Monoubiquitination of Lys-139 gives a specific tag for epigenetic transcriptional activation and is also prerequisite for histone H3 'Lys-4' and 'Lys-79' methylation. In terms of processing, phosphorylated on SPKK motifs 3, 4 and 5; which may regulate DNA binding. Dephosphorylated during maturation of spermatids to mature sperm and rephosphorylated at fertilization. Post-translationally, glcNAcylation at Ser-131 promotes monoubiquitination of Lys-139. It fluctuates in response to extracellular glucose, and associates with transcribed genes.

It localises to the nucleus. It is found in the chromosome. In terms of biological role, core component of nucleosome. Nucleosomes wrap and compact DNA into chromatin, limiting DNA accessibility to the cellular machineries which require DNA as a template. Histones thereby play a central role in transcription regulation, DNA repair, DNA replication and chromosomal stability. DNA accessibility is regulated via a complex set of post-translational modifications of histones, also called histone code, and nucleosome remodeling. This Strongylocentrotus purpuratus (Purple sea urchin) protein is Histone H2B.2, sperm.